A 187-amino-acid polypeptide reads, in one-letter code: GMP synthase [glutamine-hydrolyzing] subunit A (187 aa).

The 187-residue stretch at 1–187 (MILIIDNHGQ…KNFAKLCGEL (187 aa)) folds into the Glutamine amidotransferase type-1 domain. Catalysis depends on cysteine 76, which acts as the Nucleophile. Active-site residues include histidine 164 and glutamate 166.

Heterodimer composed of a glutamine amidotransferase subunit (A) and a GMP-binding subunit (B).

The enzyme catalyses XMP + L-glutamine + ATP + H2O = GMP + L-glutamate + AMP + diphosphate + 2 H(+). It participates in purine metabolism; GMP biosynthesis; GMP from XMP (L-Gln route): step 1/1. Functionally, catalyzes the synthesis of GMP from XMP. This Methanopyrus kandleri (strain AV19 / DSM 6324 / JCM 9639 / NBRC 100938) protein is GMP synthase [glutamine-hydrolyzing] subunit A.